Reading from the N-terminus, the 371-residue chain is Carnitine monooxygenase oxygenase subunit (371 aa).

The Rieske domain occupies 44-152 (WICVAHGSEL…VEEYAGFVFI (109 aa)). [2Fe-2S] cluster contacts are provided by cysteine 86, histidine 88, cysteine 106, and histidine 109. Fe cation contacts are provided by histidine 208, histidine 213, and aspartate 323.

It belongs to the bacterial ring-hydroxylating dioxygenase alpha subunit family. CntA subfamily. As to quaternary structure, composed of an oxygenase subunit and a reductase subunit. The cofactor is [2Fe-2S] cluster. Fe cation is required as a cofactor.

The catalysed reaction is (R)-carnitine + NADH + O2 + H(+) = (3R)-3-hydroxy-4-oxobutanoate + trimethylamine + NAD(+) + H2O. The enzyme catalyses (R)-carnitine + NADPH + O2 + H(+) = (3R)-3-hydroxy-4-oxobutanoate + trimethylamine + NADP(+) + H2O. It functions in the pathway amine and polyamine metabolism; carnitine metabolism. With respect to regulation, inhibited by EDTA. In terms of biological role, converts carnitine to trimethylamine and malic semialdehyde. Acts on both enantiomers. This chain is Carnitine monooxygenase oxygenase subunit, found in Acinetobacter pittii (strain PHEA-2).